Here is a 398-residue protein sequence, read N- to C-terminus: G2/mitotic-specific cyclin-B2 (398 aa).

2 disordered regions span residues 1-26 (MALL…KPKS) and 53-76 (AQNT…KPTA). Threonine 8 carries the post-translational modification Phosphothreonine. A compositionally biased stretch (polar residues) spans 8–23 (TVSTDLENNDTGVNSK). Residues 55–69 (NTKVPVPPTKTTNVN) are compositionally biased toward low complexity. Phosphoserine occurs at positions 77 and 92. Threonine 94 bears the Phosphothreonine mark. Serine 99, serine 392, and serine 398 each carry phosphoserine.

It belongs to the cyclin family. Cyclin AB subfamily. In terms of assembly, interacts with the CDK1 protein kinase to form a serine/threonine kinase holoenzyme complex also known as maturation promoting factor (MPF). The cyclin subunit imparts substrate specificity to the complex.

In terms of biological role, essential for the control of the cell cycle at the G2/M (mitosis) transition. The sequence is that of G2/mitotic-specific cyclin-B2 (CCNB2) from Bos taurus (Bovine).